The chain runs to 817 residues: Transcription factor SPT20 homolog-like 2 (817 aa).

Residues 1–14 (MDRDLEQALDRTEN) are compositionally biased toward basic and acidic residues. Disordered regions lie at residues 1–28 (MDRD…RRRY), 249–275 (PQQE…ERKV), 369–553 (PRKK…AAGR), 598–630 (PGSG…AVQA), and 675–697 (QLQQ…LGLS). Polar residues predominate over residues 423–440 (SHSSSGPASVSQLSSWKT). 4 stretches are compositionally biased toward low complexity: residues 469 to 479 (SSSGKISSGNS), 494 to 505 (PAAAPAVAAAAP), 513 to 531 (AAPA…GAAP), and 598 to 618 (PGSG…SSGG).

Belongs to the SPT20 family.

This chain is Transcription factor SPT20 homolog-like 2 (SUPT20HL2), found in Homo sapiens (Human).